The primary structure comprises 289 residues: MSAKFPIISITGSSGAGTTTVKDTFEKIFKRENISASFIEGDAFHRFDRETMRSKIAEEKARGVDFTHFSAEANELEILESVFAEYGRRGVGRTRHYVHDEAEAAKFGSDPGTFTDWEEFRDSDLLFYEGLHGCAVTDTVNLAQHCDLKIGVVPVINLEWIQKIHRDKATRGYSTEAVTDTILRRMPDYVNYICPQFSLTDINFQRVPIVDTSNPFIARWIPTPAESILVIRFAKPQSIDFPYLLSMLHNSYMSRANSIVVPGDKLDLAMQLIFTPLIHKLLERKHRMS.

Gly12–Thr20 is a binding site for ATP.

This sequence belongs to the phosphoribulokinase family.

It catalyses the reaction D-ribulose 5-phosphate + ATP = D-ribulose 1,5-bisphosphate + ADP + H(+). It participates in carbohydrate biosynthesis; Calvin cycle. The polypeptide is Phosphoribulokinase (cbbP) (Rhizobium meliloti (strain 1021) (Ensifer meliloti)).